Here is a 378-residue protein sequence, read N- to C-terminus: Ribosomal RNA large subunit methyltransferase G (378 aa).

This sequence belongs to the methyltransferase superfamily. RlmG family.

The protein localises to the cytoplasm. It carries out the reaction guanosine(1835) in 23S rRNA + S-adenosyl-L-methionine = N(2)-methylguanosine(1835) in 23S rRNA + S-adenosyl-L-homocysteine + H(+). Functionally, specifically methylates the guanine in position 1835 (m2G1835) of 23S rRNA. The chain is Ribosomal RNA large subunit methyltransferase G from Escherichia coli O9:H4 (strain HS).